Reading from the N-terminus, the 354-residue chain is Guanine nucleotide-binding protein alpha-2 subunit (354 aa).

The G-alpha domain maps to 33–354 (KIYKVLLLGA…QHSLKEAGMF (322 aa)). The interval 36-49 (KVLLLGASDSGKST) is G1 motif. GTP contacts are provided by aspartate 44, serine 45, glycine 46, lysine 47, serine 48, threonine 49, aspartate 148, leucine 173, threonine 179, glycine 201, asparagine 269, lysine 270, aspartate 272, and alanine 326. Serine 48 is a Mg(2+) binding site. Residues 171 to 179 (DILRSRNST) are G2 motif. Threonine 179 serves as a coordination point for Mg(2+). Residues 194 to 203 (IRMFDVGGQR) are G3 motif. The segment at 265 to 272 (ILFLNKFD) is G4 motif. A G5 motif region spans residues 324-329 (TTAVDT).

This sequence belongs to the G-alpha family. As to quaternary structure, g proteins are composed of 3 units; alpha, beta and gamma. Binding of the beta-gamma subunit complex (git5-git11) to the alpha subunit (gpa2) facilitates interaction with GPCR git3. Interacts with GPCR git3; the interaction is direct and leads to activation of gpa2 upon glucose stimulation. Interacts with adenylate cyclase cyr1 (via N-terminus); the interaction is direct and serves to activate adenylate cyclase and cAMP-PKA signaling, to repress sexual development and gluconeogenesis. It depends on Mg(2+) as a cofactor.

Its subcellular location is the cell membrane. Alpha subunit of the heterotrimeric guanine nucleotide-binding protein (G protein) involved in glucose-induced cAMP signaling. Binds to its cognate transmembrane receptor git3, which senses extracellular glucose, and activates cAMP-PKA signaling to repress sexual development and gluconeogenesis. This is Guanine nucleotide-binding protein alpha-2 subunit from Schizosaccharomyces pombe (strain 972 / ATCC 24843) (Fission yeast).